Here is a 527-residue protein sequence, read N- to C-terminus: Phosphoenolpyruvate carboxykinase (ATP) (527 aa).

Residues arginine 56, tyrosine 191, and lysine 197 each contribute to the substrate site. ATP is bound by residues lysine 197, histidine 216, and 232–240 (GLSGTGKTT). Residues lysine 197 and histidine 216 each contribute to the Mn(2+) site. Position 253 (aspartate 253) interacts with Mn(2+). Residues glutamate 281, arginine 318, 437-438 (RI), and threonine 443 each bind ATP. Arginine 318 contacts substrate.

It belongs to the phosphoenolpyruvate carboxykinase (ATP) family. Mn(2+) is required as a cofactor.

The protein localises to the cytoplasm. It carries out the reaction oxaloacetate + ATP = phosphoenolpyruvate + ADP + CO2. It participates in carbohydrate biosynthesis; gluconeogenesis. Its function is as follows. Involved in the gluconeogenesis. Catalyzes the conversion of oxaloacetate (OAA) to phosphoenolpyruvate (PEP) through direct phosphoryl transfer between the nucleoside triphosphate and OAA. The polypeptide is Phosphoenolpyruvate carboxykinase (ATP) (Shouchella clausii (strain KSM-K16) (Alkalihalobacillus clausii)).